Reading from the N-terminus, the 451-residue chain is Phosphoglucosamine mutase (451 aa).

S102 serves as the catalytic Phosphoserine intermediate. Residues S102, D242, D244, and D246 each coordinate Mg(2+). S102 bears the Phosphoserine mark.

Belongs to the phosphohexose mutase family. Requires Mg(2+) as cofactor. Post-translationally, activated by phosphorylation.

The catalysed reaction is alpha-D-glucosamine 1-phosphate = D-glucosamine 6-phosphate. In terms of biological role, catalyzes the conversion of glucosamine-6-phosphate to glucosamine-1-phosphate. This chain is Phosphoglucosamine mutase, found in Staphylococcus aureus (strain USA300).